The sequence spans 68 residues: Alpha-conotoxin PIVA (68 aa).

Positions 1–16 (MFTVFLLVVLATTVVS) are cleaved as a signal peptide. The propeptide occupies 17–41 (FTSDRASDDRNTNDKASRLLSHVVR). Disulfide bonds link cysteine 43–cysteine 57, cysteine 44–cysteine 52, and cysteine 55–cysteine 64. A 4-hydroxyproline; partial mark is found at proline 48 and proline 54. A 4-hydroxyproline modification is found at proline 61. Glutamine 66 bears the Glutamine amide mark.

The protein belongs to the conotoxin A superfamily. In terms of tissue distribution, expressed by the venom duct.

Its subcellular location is the secreted. Alpha-conotoxins act on postsynaptic membranes, they bind to the nicotinic acetylcholine receptors (nAChR) and thus inhibit them. This toxin has higher affinity for the adult subtype (alpha-1-beta-1-gamma-delta (CHRNA1-CHRNB1-CHRNG-CHRND) subunits) (IC(50)=2.3 nM) of the receptor than for the fetal subtype (alpha-1-beta-1-epsilon-delta (CHRNA1-CHRNB1-CHRND-CHRNE) subunits) (IC(50)=22 nM). The protein is Alpha-conotoxin PIVA of Conus purpurascens (Purple cone).